The primary structure comprises 389 residues: MAVRLCDVASLLRSGSWAAEPWTGQVIAAMETQLSNGPTCNNTANCPNTINCSSPVESNNTEDSKTNLIVNYLPQNMTQEELKSLFGSIGEIESCKLVRDKITEGQSLGYGFVNYIDPKDAEKAINTLNGLRLQTKTIKVSYARPSSASIRDANLYVSGLPKTMTQKELEQLFSQYGRIITSRILVDQVTGVSRGVGFIRFDKRIEAEEAIKGLNGQKPPGATEPITVKFANNPSQKVNHTILSQLYQSPNRRYPGPLAQQAQRFRLDNLLNMAYGGIKSRFSPMAIDGMTSLAGINFPGHAGTGWCIFVYNLAPDADESILWQMFGPFGAVTNVKVIRDFNTNKCKGFGFVTMTNYDEAAMAIASLNGYRLGDRVLQVSFKTSKTHKA.

3 consecutive RRM domains span residues 66–145, 153–233, and 306–384; these read TNLI…YARP, ANLY…FANN, and WCIF…FKTS.

The protein belongs to the RRM elav family. As to quaternary structure, part of a ribonucleoprotein (RNP) complex, at least composed of elavl1/elrA and/or elavl2/elrB, igf2bp3/vg1RBP, ddx6/Xp54, ybx2/frgy2, lsm14b/rap55b and, in a subset of RNP complexes, stau1/staufen. Binds RNA as a homooligomer. As to expression, expressed in brain, testis and ovary. Ovarian expression is restricted to follicle cells surrounding the oocyte. From the early tailbud stage, expression is neural-specific and is seen in both the central and peripheral nervous system in differentiating neurons but not proliferating precursors. Expressed in the retina from stage 32 with expression becoming restricted to the ganglion cell layer by later stages.

It localises to the cytoplasm. The protein resides in the cell cortex. In terms of biological role, binds to poly-U elements and AU-rich elements (AREs) in the 3'-UTR of target mRNAs. Required for the vegetal localization of vg1 mRNA. Probably required for nervous system development. This is ELAV-like protein 2 (elavl2) from Xenopus laevis (African clawed frog).